Consider the following 225-residue polypeptide: Agamous-like MADS-box protein MADS1 (225 aa).

As to expression, expressed in flowers and seeds.

It localises to the nucleus. Probable transcription factor involved in flower development. This is Agamous-like MADS-box protein MADS1 from Vitis vinifera (Grape).